The sequence spans 379 residues: RIB43A-like with coiled-coils protein 1 (379 aa).

The tract at residues 1–21 (MYNIKQSTDTKEAAAIEARRN) is disordered. Residues 8–21 (TDTKEAAAIEARRN) show a composition bias toward basic and acidic residues. 2 coiled-coil regions span residues 82–111 (KEEA…GREF) and 216–304 (NANK…QAEK).

The protein belongs to the RIB43A family. As to quaternary structure, microtubule inner protein component of sperm flagellar doublet microtubules.

It is found in the cytoplasm. It localises to the cytoskeleton. The protein resides in the flagellum axoneme. The polypeptide is RIB43A-like with coiled-coils protein 1 (RIBC1) (Homo sapiens (Human)).